Here is a 478-residue protein sequence, read N- to C-terminus: Ankyrin repeat and BTB/POZ domain-containing protein 1 (478 aa).

ANK repeat units follow at residues 1 to 31 (MDTS…EVNV) and 35 to 64 (WDST…RCEA). 2 consecutive BTB domains span residues 115 to 182 (SDVV…DIGV) and 272 to 346 (PDIC…ELPP). The stretch at 451-477 (VQTYSAIEEAQQRLRALEDLLVSIGLD) forms a coiled coil.

The protein resides in the cytoplasm. Its function is as follows. May act as a mediator of the PTEN growth-suppressive signaling pathway. May play a role in developmental processes. The polypeptide is Ankyrin repeat and BTB/POZ domain-containing protein 1 (Mus musculus (Mouse)).